The primary structure comprises 1375 residues: DNA-directed RNA polymerase subunit beta' (1375 aa).

Positions 70, 72, 85, and 88 each coordinate Zn(2+). Mg(2+)-binding residues include aspartate 461, aspartate 463, and aspartate 465. Zn(2+)-binding residues include cysteine 797, cysteine 871, cysteine 878, and cysteine 881.

It belongs to the RNA polymerase beta' chain family. As to quaternary structure, the RNAP catalytic core consists of 2 alpha, 1 beta, 1 beta' and 1 omega subunit. When a sigma factor is associated with the core the holoenzyme is formed, which can initiate transcription. Mg(2+) is required as a cofactor. It depends on Zn(2+) as a cofactor.

The catalysed reaction is RNA(n) + a ribonucleoside 5'-triphosphate = RNA(n+1) + diphosphate. DNA-dependent RNA polymerase catalyzes the transcription of DNA into RNA using the four ribonucleoside triphosphates as substrates. The protein is DNA-directed RNA polymerase subunit beta' of Neorickettsia sennetsu (strain ATCC VR-367 / Miyayama) (Ehrlichia sennetsu).